We begin with the raw amino-acid sequence, 251 residues long: 5'-nucleotidase SurE (251 aa).

Positions 8, 9, 39, and 95 each coordinate a divalent metal cation.

This sequence belongs to the SurE nucleotidase family. A divalent metal cation serves as cofactor.

The protein resides in the cytoplasm. It catalyses the reaction a ribonucleoside 5'-phosphate + H2O = a ribonucleoside + phosphate. In terms of biological role, nucleotidase that shows phosphatase activity on nucleoside 5'-monophosphates. This Ralstonia pickettii (strain 12J) protein is 5'-nucleotidase SurE.